The following is a 434-amino-acid chain: Histidinol dehydrogenase (434 aa).

NAD(+)-binding residues include Tyr-130, Gln-188, and Asn-211. Substrate is bound by residues Ser-237, Gln-259, and His-262. Zn(2+) contacts are provided by Gln-259 and His-262. Catalysis depends on proton acceptor residues Glu-326 and His-327. Substrate contacts are provided by His-327, Asp-360, Glu-414, and His-419. Asp-360 contacts Zn(2+). His-419 contacts Zn(2+).

This sequence belongs to the histidinol dehydrogenase family. Homodimer. Zn(2+) is required as a cofactor.

The catalysed reaction is L-histidinol + 2 NAD(+) + H2O = L-histidine + 2 NADH + 3 H(+). It participates in amino-acid biosynthesis; L-histidine biosynthesis; L-histidine from 5-phospho-alpha-D-ribose 1-diphosphate: step 9/9. Catalyzes the sequential NAD-dependent oxidations of L-histidinol to L-histidinaldehyde and then to L-histidine. This Salmonella choleraesuis (strain SC-B67) protein is Histidinol dehydrogenase.